The primary structure comprises 799 residues: Putative aconitate hydratase, mitochondrial (799 aa).

The transit peptide at 1–32 (MVRQLVWQRATASRRLAPKCLSPQQLFARRGL) directs the protein to the mitochondrion. Substrate-binding positions include Q108 and 201 to 203 (DSH). Residues C399, C462, and C465 each coordinate [4Fe-4S] cluster. Substrate contacts are provided by R489 and R494. The segment at 538–564 (KFRPPQGSDLPSAGFADGNPALQPSAG) is disordered. 685-686 (AR) is a substrate binding site.

It belongs to the aconitase/IPM isomerase family.

The protein localises to the mitochondrion. In terms of biological role, has no detectable activity towards cis-acontiate or cis-homoaconitate. In Aspergillus fumigatus (strain ATCC MYA-4609 / CBS 101355 / FGSC A1100 / Af293) (Neosartorya fumigata), this protein is Putative aconitate hydratase, mitochondrial (acoB).